The chain runs to 350 residues: Adenine deaminase (350 aa).

H24, H26, and H207 together coordinate Zn(2+). The active-site Proton donor is the E210. D288 contributes to the Zn(2+) binding site. D289 provides a ligand contact to substrate.

The protein belongs to the metallo-dependent hydrolases superfamily. Adenosine and AMP deaminases family. Adenine deaminase type 2 subfamily. Requires Zn(2+) as cofactor.

The catalysed reaction is adenine + H2O + H(+) = hypoxanthine + NH4(+). Catalyzes the hydrolytic deamination of adenine to hypoxanthine. Plays an important role in the purine salvage pathway and in nitrogen catabolism. The protein is Adenine deaminase of Paraburkholderia xenovorans (strain LB400).